We begin with the raw amino-acid sequence, 32 residues long: CSNLSTCVLSAYWRNLNNFHRFSGMGFGPETP.

A disulfide bond links Cys-1 and Cys-7. The residue at position 32 (Pro-32) is a Proline amide.

The protein belongs to the calcitonin family.

The protein localises to the secreted. Functionally, calcitonin is a peptide hormone that causes a rapid but short-lived drop in the level of calcium and phosphate in blood by promoting the incorporation of those ions in the bones. Calcitonin function is mediated by the calcitonin receptor/CALCR and the CALCR-RAMP2 (AMYR2) receptor complex. The sequence is that of Calcitonin (CALCA) from Sus scrofa (Pig).